A 479-amino-acid polypeptide reads, in one-letter code: Chromosomal replication initiator protein DnaA (479 aa).

The tract at residues 1-74 (MFSGVVMAWQ…RSLTGVDSSI (74 aa)) is domain I, interacts with DnaA modulators. Residues 74–142 (ITDVRFLEKK…SVPKNNASIR (69 aa)) are domain II. Positions 143–360 (ALHPRYTFDE…SAITAIGARA (218 aa)) are domain III, AAA+ region. 4 residues coordinate ATP: Gly187, Gly189, Lys190, and Ser191. The tract at residues 361–479 (RLMGGYIDMN…NLLSDKVKQI (119 aa)) is domain IV, binds dsDNA.

It belongs to the DnaA family. In terms of assembly, oligomerizes as a right-handed, spiral filament on DNA at oriC.

The protein resides in the cytoplasm. Plays an essential role in the initiation and regulation of chromosomal replication. ATP-DnaA binds to the origin of replication (oriC) to initiate formation of the DNA replication initiation complex once per cell cycle. Binds the DnaA box (a 9 base pair repeat at the origin) and separates the double-stranded (ds)DNA. Forms a right-handed helical filament on oriC DNA; dsDNA binds to the exterior of the filament while single-stranded (ss)DNA is stabiized in the filament's interior. The ATP-DnaA-oriC complex binds and stabilizes one strand of the AT-rich DNA unwinding element (DUE), permitting loading of DNA polymerase. After initiation quickly degrades to an ADP-DnaA complex that is not apt for DNA replication. Binds acidic phospholipids. The protein is Chromosomal replication initiator protein DnaA of Desulfotalea psychrophila (strain LSv54 / DSM 12343).